The following is a 235-amino-acid chain: Casparian strip membrane protein 2 (235 aa).

The tract at residues 1 to 46 is disordered; it reads MSGSDTSGSVHVDEHGHGKASSSYDGAGAPAPAPAPFQGHRKAGSG. Over 1-67 the chain is Cytoplasmic; sequence MSGSDTSGSV…GSGGDGLRRC (67 aa). A helical transmembrane segment spans residues 68–88; the sequence is LGLIDFVLRVAAFGPTLAAAI. Residues 89 to 115 are Extracellular-facing; that stretch reads SIGTSDERLSVFTNYFQFRARFDDFPA. A helical transmembrane segment spans residues 116 to 136; that stretch reads FEFFIVANAIAAGYMVLSLPF. The Cytoplasmic segment spans residues 137–150; the sequence is SAATIMSSKATGVK. The chain crosses the membrane as a helical span at residues 151–171; sequence LLLLICDTIMVGLLTAAASAA. Residues 172-203 are Extracellular-facing; the sequence is AAMVYVAHEGNLRANWVPICLQFHGFCQRTSG. The helical transmembrane segment at 204-224 threads the bilayer; sequence AVIASFLAVFVLMVLIVMAAF. Residues 225–235 are Cytoplasmic-facing; it reads TMPRRTHHTAS.

It belongs to the Casparian strip membrane proteins (CASP) family. As to quaternary structure, homodimer and heterodimers.

The protein localises to the cell membrane. Its function is as follows. Regulates membrane-cell wall junctions and localized cell wall deposition. Required for establishment of the Casparian strip membrane domain (CSD) and the subsequent formation of Casparian strips, a cell wall modification of the root endodermis that determines an apoplastic barrier between the intraorganismal apoplasm and the extraorganismal apoplasm and prevents lateral diffusion. The sequence is that of Casparian strip membrane protein 2 from Oryza sativa subsp. indica (Rice).